The primary structure comprises 314 residues: Protein SPOROCYTELESS (314 aa).

The segment covering 1–17 (MATSLFFMSTDQNSVGN) has biased composition (polar residues). Disordered stretches follow at residues 1-20 (MATSLFFMSTDQNSVGNPND) and 33-62 (GEIRTETLKSRGRKPGSKTGQQKQKKPTLR). The SPL motif lies at 62 to 70 (RGMGVAKLE). Residues 308–314 (IDLSLKL) carry the EAR motif.

Belongs to the NOZZLE family. As to quaternary structure, homodimer and heterodimer with SPEARs. Interacts in vitro with YAB1, YAB3 and YAB4. Interacts (via EAR motif) with TPL, TPR1, TPR2, TPR3 and TPR4. Interacts with SPEAR1, SPEAR2, SPEAR3, SPEAR4, TCP1, TCP6, TCP8, TCP9, TCP11, TCP15, TCP20, TCP21 and TCP23. Interacts with TCP2, TCP3, TCP4, TCP5, TCP10, TCP13, TCP17 and TCP24. Expressed in flower buds. Not found in leaves, siliques and stems. Detected in rosette leaves, stem tissue and seedlings.

The protein resides in the nucleus. In terms of biological role, transcriptional regulator of sporocyte development. Acts as an adapter-like transcriptional repressor recruiting TPL/TPR corepressors to inhibit TCP transcription factors. Required for nucellus and embryo sac development. Plays a central role in patterning both the proximal-distal and the adaxial-abaxial axes during ovule development. Involved in establishing the prospective chalaza of the ovule and in controlling the cell number and the length of the funiculus, and is required for the development of the integuments. Required, with BEL1, for cytokinin-induced PIN1 expression in ovules. Involved in controlling stamen identity. May also regulate the morphology of lateral organs by repressing auxin production. This Arabidopsis thaliana (Mouse-ear cress) protein is Protein SPOROCYTELESS.